A 258-amino-acid chain; its full sequence is Proteasome subunit alpha (258 aa).

This sequence belongs to the peptidase T1A family. As to quaternary structure, the 20S proteasome core is composed of 14 alpha and 14 beta subunits that assemble into four stacked heptameric rings, resulting in a barrel-shaped structure. The two inner rings, each composed of seven catalytic beta subunits, are sandwiched by two outer rings, each composed of seven alpha subunits. The catalytic chamber with the active sites is on the inside of the barrel. Has a gated structure, the ends of the cylinder being occluded by the N-termini of the alpha-subunits. Is capped at one or both ends by the proteasome regulatory ATPase, PAN.

The protein resides in the cytoplasm. The formation of the proteasomal ATPase PAN-20S proteasome complex, via the docking of the C-termini of PAN into the intersubunit pockets in the alpha-rings, triggers opening of the gate for substrate entry. Interconversion between the open-gate and close-gate conformations leads to a dynamic regulation of the 20S proteasome proteolysis activity. In terms of biological role, component of the proteasome core, a large protease complex with broad specificity involved in protein degradation. In Aeropyrum pernix (strain ATCC 700893 / DSM 11879 / JCM 9820 / NBRC 100138 / K1), this protein is Proteasome subunit alpha.